The primary structure comprises 431 residues: V-type ATP synthase beta chain (431 aa).

Belongs to the ATPase alpha/beta chains family.

In terms of biological role, produces ATP from ADP in the presence of a proton gradient across the membrane. The V-type beta chain is a regulatory subunit. In Treponema denticola (strain ATCC 35405 / DSM 14222 / CIP 103919 / JCM 8153 / KCTC 15104), this protein is V-type ATP synthase beta chain.